The chain runs to 284 residues: Steroidogenic acute regulatory protein, mitochondrial (284 aa).

A mitochondrion-targeting transit peptide spans 1 to 62 (MFLATFKLCA…RRSSLLGSQL (62 aa)). Phosphoserine; by PKA occurs at positions 56 and 194. Positions 66-279 (LYSDQELSYI…LRKRLEASPA (214 aa)) constitute an START domain.

As to quaternary structure, may interact with TSPO. As to expression, expressed within glia and neurons in discrete regions of the brain.

The protein localises to the mitochondrion. The enzyme catalyses cholesterol(in) = cholesterol(out). It functions in the pathway steroid metabolism; cholesterol metabolism. Functionally, plays a key role in steroid hormone synthesis by enhancing the metabolism of cholesterol into pregnenolone. Transporter that binds to and transport cholesterol through the intermembrane space of the mitochondrion. In Mus musculus (Mouse), this protein is Steroidogenic acute regulatory protein, mitochondrial (Star).